We begin with the raw amino-acid sequence, 170 residues long: Peptide deformylase (170 aa).

Residues Cys91 and His133 each coordinate Fe cation. Residue Glu134 is part of the active site. His137 lines the Fe cation pocket.

The protein belongs to the polypeptide deformylase family. It depends on Fe(2+) as a cofactor.

The catalysed reaction is N-terminal N-formyl-L-methionyl-[peptide] + H2O = N-terminal L-methionyl-[peptide] + formate. Its function is as follows. Removes the formyl group from the N-terminal Met of newly synthesized proteins. Requires at least a dipeptide for an efficient rate of reaction. N-terminal L-methionine is a prerequisite for activity but the enzyme has broad specificity at other positions. The protein is Peptide deformylase of Yersinia enterocolitica serotype O:8 / biotype 1B (strain NCTC 13174 / 8081).